The primary structure comprises 452 residues: Phosphoglucosamine mutase (452 aa).

Residue S103 is the Phosphoserine intermediate of the active site. Residues S103, D244, D246, and D248 each coordinate Mg(2+). A Phosphoserine modification is found at S103.

It belongs to the phosphohexose mutase family. The cofactor is Mg(2+). Activated by phosphorylation.

It carries out the reaction alpha-D-glucosamine 1-phosphate = D-glucosamine 6-phosphate. In terms of biological role, catalyzes the conversion of glucosamine-6-phosphate to glucosamine-1-phosphate. The sequence is that of Phosphoglucosamine mutase from Fusobacterium nucleatum subsp. nucleatum (strain ATCC 25586 / DSM 15643 / BCRC 10681 / CIP 101130 / JCM 8532 / KCTC 2640 / LMG 13131 / VPI 4355).